Here is a 213-residue protein sequence, read N- to C-terminus: Adenylate kinase (213 aa).

10–15 (GAGKGT) lines the ATP pocket. Residues 30–59 (STGDMFRAAMANQTEMGLLAKSYIDKGDLV) are NMP. Residues Thr31, Arg36, 57 to 59 (DLV), 86 to 89 (GYPR), and Gln93 each bind AMP. The tract at residues 127-160 (GRIIHKKTGETFHKIFNPPAGDYDENDYYQREDD) is LID. ATP is bound by residues Arg128 and 137 to 138 (TF). AMP is bound by residues Arg157 and Arg168. Gln196 contributes to the ATP binding site.

The protein belongs to the adenylate kinase family. Monomer.

The protein localises to the cytoplasm. It carries out the reaction AMP + ATP = 2 ADP. It functions in the pathway purine metabolism; AMP biosynthesis via salvage pathway; AMP from ADP: step 1/1. Catalyzes the reversible transfer of the terminal phosphate group between ATP and AMP. Plays an important role in cellular energy homeostasis and in adenine nucleotide metabolism. The chain is Adenylate kinase from Streptococcus uberis (strain ATCC BAA-854 / 0140J).